The primary structure comprises 313 residues: MALPEFSMRQLLEAGAHFGHQTHRWNPKMDRYIFGSRSNIHIIDLSQSIPLLHQALVKVREVAAAGGRVLFVGTKRQASDPVATAAKRCAQYYVNHRWLGGTLTNWRTVSGSIARLRELEGIMGGESAGRSKKELLQLTRERDKLELSLGGIKDMGGIPDIMFVIDTNKEAIAILEARKLNIPVVAILDTNCDPDGITYPIPGNDDAARALQLYCDLIADAVLDGLAAGQANSGVDLGASIAPIEPTLARELTPEPVAEAAAPEVAAAEVAEQEAAFEAAAAPAAPAVEPAPEAAQEATAEAIEAVAEEPAAS.

Positions 281-301 (AAPAAPAVEPAPEAAQEATAE) are disordered.

The protein belongs to the universal ribosomal protein uS2 family.

The protein is Small ribosomal subunit protein uS2 of Caulobacter sp. (strain K31).